A 351-amino-acid polypeptide reads, in one-letter code: Nicotinate-nucleotide--dimethylbenzimidazole phosphoribosyltransferase (351 aa).

Glu318 (proton acceptor) is an active-site residue.

This sequence belongs to the CobT family.

It carries out the reaction 5,6-dimethylbenzimidazole + nicotinate beta-D-ribonucleotide = alpha-ribazole 5'-phosphate + nicotinate + H(+). Its pathway is nucleoside biosynthesis; alpha-ribazole biosynthesis; alpha-ribazole from 5,6-dimethylbenzimidazole: step 1/2. Its function is as follows. Catalyzes the synthesis of alpha-ribazole-5'-phosphate from nicotinate mononucleotide (NAMN) and 5,6-dimethylbenzimidazole (DMB). This chain is Nicotinate-nucleotide--dimethylbenzimidazole phosphoribosyltransferase, found in Chloroflexus aurantiacus (strain ATCC 29366 / DSM 635 / J-10-fl).